The following is a 507-amino-acid chain: ESX-5 secretion system ATPase EccB5 (507 aa).

Residues 56–76 traverse the membrane as a helical segment; it reads VVASVSAALVICLGSLLWSFI.

Belongs to the EccB family. In terms of assembly, part of the ESX-5 / type VII secretion system (T7SS), which is composed of cytosolic and membrane components. The ESX-5 membrane complex is composed of EccB5, EccC5, EccD5 and EccE5.

It is found in the cell inner membrane. Its function is as follows. An ATPase. Part of the ESX-5 specialized secretion system, which is responsible for the secretion of EsxN and a number of PE_PGRS and PPE proteins. The protein is ESX-5 secretion system ATPase EccB5 of Mycobacterium marinum (strain ATCC BAA-535 / M).